Consider the following 88-residue polypeptide: Small ribosomal subunit protein bS16 (88 aa).

Belongs to the bacterial ribosomal protein bS16 family.

This is Small ribosomal subunit protein bS16 from Geotalea uraniireducens (strain Rf4) (Geobacter uraniireducens).